The primary structure comprises 190 residues: MSQEIEIEFKNMLTKQEFKNIASALQLTEKDFTDQKNHYFDTDSFALKQKHAALRIRRKNGKYVLTLKEPADVGLLETHQQLSEVSDLAGFSVPEGPVKDQLHKLQIDTDAIQYFGSLATNRAEKETEKGLIVLDHSRYLNKEDYEIEFEAADWHEGRQAFEKLLQQFSIPQRETKNKILRFYEEKRKSI.

Positions 4 to 189 (EIEIEFKNML…LRFYEEKRKS (186 aa)) constitute a CYTH domain.

The sequence is that of Putative triphosphatase YjbK (yjbK) from Bacillus subtilis (strain 168).